The primary structure comprises 525 residues: Keratin, type II cytoskeletal 4 (525 aa).

The tract at residues 1–145 (MIARQSSVRG…DPEIQKIRTA (145 aa)) is head. Arg-13 bears the Omega-N-methylarginine mark. Residues 146–181 (EREQIKTLNNKFASFIDKVRFLEQQNKVLETKWNLL) form a coil 1A region. Residues 146 to 459 (EREQIKTLNN…KLLEGEECRM (314 aa)) form the IF rod domain. Residues 182–200 (QQQTTTTSPKSLDPFFETY) form a linker 1 region. The interval 201-292 (INALRKNLDT…VLYEAELAQM (92 aa)) is coil 1B. The interval 293-316 (QTHVSDTSVVLSMDNNRNLDLDGI) is linker 12. The coil 2 stretch occupies residues 317–455 (IAEVRAQYED…ATYRKLLEGE (139 aa)). Residues 456–524 (ECRMSGECKS…SSATITKRSP (69 aa)) are tail.

The protein belongs to the intermediate filament family. Heterotetramer of two type I and two type II keratins. Keratin-4 is generally associated with keratin-13. In terms of tissue distribution, expressed in the dorsal and ventral epithelium of the tongue. Highest expression levels are detected in the suprabasal layer with low levels detected in the basal cell layer. Within the suprabasal layer expression is highest in the spinous cells, decreases in the granular cells and is not detected in the stratum corneum.

The polypeptide is Keratin, type II cytoskeletal 4 (Krt4) (Mus musculus (Mouse)).